A 283-amino-acid chain; its full sequence is Undecaprenyl-diphosphatase (283 aa).

A run of 7 helical transmembrane segments spans residues 40-60 (GAAF…IYFF), 85-105 (AKMG…GLLF), 113-133 (LRSL…LTIA), 153-173 (IGWK…IPGS), 193-213 (AARF…VFQL), 227-247 (LIAI…SIAF), and 259-279 (VFII…ATGM).

It belongs to the UppP family.

The protein resides in the cell inner membrane. The catalysed reaction is di-trans,octa-cis-undecaprenyl diphosphate + H2O = di-trans,octa-cis-undecaprenyl phosphate + phosphate + H(+). Catalyzes the dephosphorylation of undecaprenyl diphosphate (UPP). Confers resistance to bacitracin. This Chlorobium limicola (strain DSM 245 / NBRC 103803 / 6330) protein is Undecaprenyl-diphosphatase.